A 144-amino-acid polypeptide reads, in one-letter code: Small ribosomal subunit protein uS12 (144 aa).

Residue Asp-103 is modified to 3-methylthioaspartic acid. The tract at residues 125–144 is disordered; the sequence is QQGRSRYGAKKGKAAPAKKK. A compositionally biased stretch (basic residues) spans 131-144; sequence YGAKKGKAAPAKKK.

Belongs to the universal ribosomal protein uS12 family. Part of the 30S ribosomal subunit. Contacts proteins S8 and S17. May interact with IF1 in the 30S initiation complex.

In terms of biological role, with S4 and S5 plays an important role in translational accuracy. Functionally, interacts with and stabilizes bases of the 16S rRNA that are involved in tRNA selection in the A site and with the mRNA backbone. Located at the interface of the 30S and 50S subunits, it traverses the body of the 30S subunit contacting proteins on the other side and probably holding the rRNA structure together. The combined cluster of proteins S8, S12 and S17 appears to hold together the shoulder and platform of the 30S subunit. The sequence is that of Small ribosomal subunit protein uS12 from Dehalococcoides mccartyi (strain ATCC BAA-2100 / JCM 16839 / KCTC 5957 / BAV1).